Here is a 249-residue protein sequence, read N- to C-terminus: Undecaprenyl-diphosphatase (249 aa).

8 helical membrane passes run 11–31, 35–55, 80–100, 101–121, 135–155, 180–200, 202–222, and 226–246; these read GLTEFLPISSSGHLAIFTAIF, PDVGYFAFLHLATFLAVLIFV, LVLSTIPAVIVGLCFGDFIES, VFSSTFLIGVFLSITGILMLL, IPYLDALIVGIFQAFSVLPGI, FLMSLPVTFGAGILELQKVAF, TEQIFGFFISFLTGLLGLYLV, and VIGGKLKIFGYYCVLASFFVL.

This sequence belongs to the UppP family.

It localises to the cell membrane. It carries out the reaction di-trans,octa-cis-undecaprenyl diphosphate + H2O = di-trans,octa-cis-undecaprenyl phosphate + phosphate + H(+). Catalyzes the dephosphorylation of undecaprenyl diphosphate (UPP). The polypeptide is Undecaprenyl-diphosphatase (Methanococcus maripaludis (strain C6 / ATCC BAA-1332)).